Here is a 233-residue protein sequence, read N- to C-terminus: Homeobox protein EMX1 (233 aa).

The homeobox DNA-binding region spans 135-194; the sequence is PKRIRTAFSPSQLLRLERAFEKNHYVVGAERKQLASSLSLSETQVKVWFQNRRTKYKRQK. Positions 192 to 233 are disordered; it reads RQKLEEEGPDSDQKKKGSHHINRWRLATKQPNGEDIDVTSND. Residues 193-206 show a composition bias toward basic and acidic residues; it reads QKLEEEGPDSDQKK.

The protein belongs to the EMX homeobox family.

Its subcellular location is the nucleus. Functionally, may function in combinations with OTX1/2 to specify cell fates in the developing central nervous system. In Xenopus tropicalis (Western clawed frog), this protein is Homeobox protein EMX1 (emx1).